A 291-amino-acid chain; its full sequence is Phytanoyl-CoA dioxygenase domain-containing protein 1 (291 aa).

2-oxoglutarate is bound by residues Lys-102, Met-141, 156-158 (HQD), and Trp-174. Positions 156 and 158 each coordinate Fe cation. His-246 is a Fe cation binding site. Positions 248 and 257 each coordinate 2-oxoglutarate.

It belongs to the PhyH family. PHYHD1 subfamily. Fe cation is required as a cofactor.

Functionally, 2-oxoglutarate(2OG)-dependent dioxygenase that catalyzes the conversion of 2-oxoglutarate to succinate and CO(2) in an iron-dependent manner. However, does not couple 2OG turnover to the hydroxylation of acyl-coenzyme A derivatives, implying that it is not directly involved in phytanoyl coenzyme-A metabolism. Does not show detectable activity towards fatty acid CoA thioesters. This chain is Phytanoyl-CoA dioxygenase domain-containing protein 1 (phyhd1), found in Danio rerio (Zebrafish).